The sequence spans 484 residues: Calcium-dependent protein kinase 31 (484 aa).

G2 carries the N-myristoyl glycine lipid modification. A Protein kinase domain is found at 28–290 (YILGDELGQG…AAEVLGHPWM (263 aa)). Residues 34–42 (LGQGQFGIT) and K57 contribute to the ATP site. D156 acts as the Proton acceptor in catalysis. S196 carries the post-translational modification Phosphoserine. The segment at 295–325 (ASDKPIDGVVLSRLKQFRDMNKLKKVALKVI) is autoinhibitory domain. EF-hand domains follow at residues 332–367 (EEIK…LGSN), 368–403 (LSKT…RYRL), 404–439 (DRDD…HGVG), and 444–474 (IKQI…GSSL). D345, D347, S349, T351, E356, D381, D383, N385, T387, E392, D417, D419, D421, H423, E428, D452, D454, D456, K458, and E463 together coordinate Ca(2+).

Belongs to the protein kinase superfamily. Ser/Thr protein kinase family. CDPK subfamily.

The protein resides in the membrane. It catalyses the reaction L-seryl-[protein] + ATP = O-phospho-L-seryl-[protein] + ADP + H(+). The enzyme catalyses L-threonyl-[protein] + ATP = O-phospho-L-threonyl-[protein] + ADP + H(+). With respect to regulation, activated by calcium. Autophosphorylation may play an important role in the regulation of the kinase activity. In terms of biological role, may play a role in signal transduction pathways that involve calcium as a second messenger. This is Calcium-dependent protein kinase 31 (CPK31) from Arabidopsis thaliana (Mouse-ear cress).